Here is a 141-residue protein sequence, read N- to C-terminus: Large ribosomal subunit protein uL11 (141 aa).

The protein belongs to the universal ribosomal protein uL11 family. In terms of assembly, part of the ribosomal stalk of the 50S ribosomal subunit. Interacts with L10 and the large rRNA to form the base of the stalk. L10 forms an elongated spine to which L12 dimers bind in a sequential fashion forming a multimeric L10(L12)X complex. One or more lysine residues are methylated.

In terms of biological role, forms part of the ribosomal stalk which helps the ribosome interact with GTP-bound translation factors. The protein is Large ribosomal subunit protein uL11 of Carboxydothermus hydrogenoformans (strain ATCC BAA-161 / DSM 6008 / Z-2901).